The following is a 369-amino-acid chain: Glutamate 5-kinase (369 aa).

Lysine 7 lines the ATP pocket. Substrate-binding residues include serine 48, aspartate 135, and asparagine 147. ATP-binding positions include 167-168 and 208-214; these read TD and SGGMASK. The 79-residue stretch at 275–353 folds into the PUA domain; it reads AGALHLDEGA…HEIAALLGIE (79 aa).

This sequence belongs to the glutamate 5-kinase family.

It is found in the cytoplasm. It carries out the reaction L-glutamate + ATP = L-glutamyl 5-phosphate + ADP. The protein operates within amino-acid biosynthesis; L-proline biosynthesis; L-glutamate 5-semialdehyde from L-glutamate: step 1/2. Catalyzes the transfer of a phosphate group to glutamate to form L-glutamate 5-phosphate. This Gloeobacter violaceus (strain ATCC 29082 / PCC 7421) protein is Glutamate 5-kinase.